Consider the following 734-residue polypeptide: Polyribonucleotide nucleotidyltransferase (734 aa).

The Mg(2+) site is built by Asp-503 and Asp-509. The KH domain occupies 570-629; that stretch reads PKLSTIQVPVDAIGMIIGKGGETIRSITEETGAQINVDDDGTVTISSPNGESAAAAIETI. Positions 639–713 constitute an S1 motif domain; sequence GTIYMGKVKD…GKIRYALSIK (75 aa).

This sequence belongs to the polyribonucleotide nucleotidyltransferase family. It depends on Mg(2+) as a cofactor.

It localises to the cytoplasm. It catalyses the reaction RNA(n+1) + phosphate = RNA(n) + a ribonucleoside 5'-diphosphate. Involved in mRNA degradation. Catalyzes the phosphorolysis of single-stranded polyribonucleotides processively in the 3'- to 5'-direction. The chain is Polyribonucleotide nucleotidyltransferase from Chlorobium phaeobacteroides (strain BS1).